A 157-amino-acid polypeptide reads, in one-letter code: MDFLMSKHEADAPHLLIVEARFYDDLADALLDGAKAALDEAGATYDVVTVPGALEIPATISFALDGADNGGTEYDGFVALGTVIRGETYHFDIVSNESCRALTDLSVEESIAIGNGILTVENEEQAWVRARREDKDKGGFAARAALTMIGLRKKFGA.

Residues Phe-22, 53–55 (ALE), and 82–84 (TVI) contribute to the 5-amino-6-(D-ribitylamino)uracil site. 87 to 88 (ET) contributes to the (2S)-2-hydroxy-3-oxobutyl phosphate binding site. The active-site Proton donor is the His-90. 5-amino-6-(D-ribitylamino)uracil is bound at residue Asn-115. Arg-129 is a binding site for (2S)-2-hydroxy-3-oxobutyl phosphate.

The protein belongs to the DMRL synthase family.

It catalyses the reaction (2S)-2-hydroxy-3-oxobutyl phosphate + 5-amino-6-(D-ribitylamino)uracil = 6,7-dimethyl-8-(1-D-ribityl)lumazine + phosphate + 2 H2O + H(+). It participates in cofactor biosynthesis; riboflavin biosynthesis; riboflavin from 2-hydroxy-3-oxobutyl phosphate and 5-amino-6-(D-ribitylamino)uracil: step 1/2. Catalyzes the formation of 6,7-dimethyl-8-ribityllumazine by condensation of 5-amino-6-(D-ribitylamino)uracil with 3,4-dihydroxy-2-butanone 4-phosphate. This is the penultimate step in the biosynthesis of riboflavin. The sequence is that of 6,7-dimethyl-8-ribityllumazine synthase 1 from Brucella suis biovar 1 (strain 1330).